The sequence spans 413 residues: Arginine deiminase (413 aa).

Residue cysteine 403 is the Amidino-cysteine intermediate of the active site.

Belongs to the arginine deiminase family.

It localises to the cytoplasm. The catalysed reaction is L-arginine + H2O = L-citrulline + NH4(+). It functions in the pathway amino-acid degradation; L-arginine degradation via ADI pathway; carbamoyl phosphate from L-arginine: step 1/2. The chain is Arginine deiminase from Clostridium perfringens (strain SM101 / Type A).